Here is a 216-residue protein sequence, read N- to C-terminus: Cytidylate kinase (216 aa).

Gly7–Thr15 is a binding site for ATP.

This sequence belongs to the cytidylate kinase family. Type 1 subfamily.

Its subcellular location is the cytoplasm. The enzyme catalyses CMP + ATP = CDP + ADP. It carries out the reaction dCMP + ATP = dCDP + ADP. The chain is Cytidylate kinase from Chlamydia pneumoniae (Chlamydophila pneumoniae).